A 132-amino-acid chain; its full sequence is MRMLLCLNVLTLSCVWAIAMEIPMSTVVKETLIQLSTHRALLTSNETMRLPVPTHKNHQLCIGEIFQGLDILKNQTVRGGTVEILFQNLSLIKKYIDGQKEKCGEERRKTRHFLDYLQEFLGVMSTEWAMEV.

An N-terminal signal peptide occupies residues 1–19; the sequence is MRMLLCLNVLTLSCVWAIA. 3 N-linked (GlcNAc...) asparagine glycosylation sites follow: N45, N74, and N88.

Belongs to the IL-5 family. As to quaternary structure, homodimer; disulfide-linked. Interacts with IL5RA. Interacts with CSF2RB.

It is found in the secreted. In terms of biological role, homodimeric cytokine expressed predominantly by T-lymphocytes and NK cells that plays an important role in the survival, differentiation, and chemotaxis of eosinophils. Acts also on activated and resting B-cells to induce immunoglobulin production, growth, and differentiation. Mechanistically, exerts its biological effects through a receptor composed of IL5RA subunit and the cytokine receptor common subunit beta/CSF2RB. Binding to the receptor leads to activation of various kinases including LYN, SYK and JAK2 and thereby propagates signals through the RAS-MAPK and JAK-STAT5 pathways respectively. The polypeptide is Interleukin-5 (Il5) (Rattus norvegicus (Rat)).